Reading from the N-terminus, the 228-residue chain is Thymidine kinase (228 aa).

23–30 (GNIGCGKS) is a binding site for ATP. The active-site Proton acceptor is the E50. Substrate contacts are provided by Y68, Q79, and F109. R157 contributes to the ATP binding site.

Belongs to the DCK/DGK family.

The enzyme catalyses thymidine + ATP = dTMP + ADP + H(+). This is Thymidine kinase (TK) from Ictaluridae (bullhead catfishes).